We begin with the raw amino-acid sequence, 1218 residues long: NACHT, LRR and PYD domains-containing protein 1a allele 3 (1218 aa).

The span at Met-1 to Thr-29 shows a compositional bias: polar residues. Disordered stretches follow at residues Met-1 to Gln-44 and Glu-71 to Glu-91. Basic residues predominate over residues Arg-77–Leu-87. Positions Gln-175–Leu-484 constitute an NACHT domain. Gly-181–Ser-188 contacts ATP. LRR repeat units follow at residues Lys-343–Cys-364, Asn-673–Cys-693, and Arg-730–Cys-750. A compositionally biased stretch (polar residues) spans Thr-799–Lys-815. Residues Thr-799–Val-842 are disordered. The segment at Phe-835–Phe-968 is ZU5. The region spanning Phe-835 to Ser-1118 is the FIIND domain. A UPA region spans residues Ser-969–Ser-1118. The 90-residue stretch at Asp-1122–Ser-1211 folds into the CARD domain.

The protein belongs to the NLRP family. In terms of assembly, interacts (via LRR repeats) with BCL2 and BCL2L1 (via the loop between motifs BH4 and BH3). Interacts with NOD2; this interaction is enhanced in the presence of muramyl dipeptide (MDP) and increases IL1B release. Interacts with EIF2AK2/PKR; this interaction requires EIF2AK2 activity, is accompanied by EIF2AK2 autophosphorylation and promotes inflammasome assembly in response to danger-associated signals. Interacts with MEFV; this interaction targets Nlrp1a to degradation by autophagy, hence preventing excessive IL1B- and IL18-mediated inflammation. Interacts with DPP9; leading to inhibit activation of the inflammasome. DPP9 acts via formation of a ternary complex, composed of a DPP9 homodimer, one full-length NLRP1 protein, and one cleaved C-terminus of Nlrp1a (NACHT, LRR and PYD domains-containing protein 1a, C-terminus). Interacts with DPP8; leading to inhibit activation of the inflammasome, probably via formation of a ternary complex with DPP8. As to quaternary structure, interacts with the C-terminal part of Nlrp1a (NACHT, LRR and PYD domains-containing protein 1a, C-terminus) in absence of pathogens and other damage-associated signals. Interacts with the N-terminal part of Nlrp1a (NACHT, LRR and PYD domains-containing protein 1a, N-terminus) in absence of pathogens and other damage-associated signals. Homomultimer; forms the Nlrp1a inflammasome polymeric complex, a filament composed of homopolymers of this form in response to pathogens and other damage-associated signals. The Nlrp1a inflammasome polymeric complex directly recruits pro-caspase-1 (proCASP1) independently of PYCARD/ASC. Interacts (via CARD domain) with CASP1 (via CARD domain); leading to CASP1 activation. Post-translationally, autocatalytically cleaved. Autocatalytic cleavage in FIIND region occurs constitutively, prior to activation signals, and is required for inflammasome activity (IL1B release), possibly by facilitating CASP1 binding. Both N- and C-terminal parts remain associated non-covalently. Ubiquitinated in response to pathogen-associated signals, leading to its degradation by the proteasome and subsequent release of the cleaved C-terminal part of the protein (NACHT, LRR and PYD domains-containing protein 1a, C-terminus), which polymerizes and forms the Nlrp1a inflammasome.

Its subcellular location is the cytoplasm. It is found in the cytosol. It localises to the nucleus. The protein resides in the inflammasome. Its activity is regulated as follows. Activated by pathogens and other damage-associated signals: activation promotes ubiquitination and degradation of the N-terminal part, releasing the cleaved C-terminal part of the protein (NACHT, LRR and PYD domains-containing protein 1a, C-terminus), which polymerizes and forms the Nlrp1a inflammasome. Nlrp1a inflammasome is inhibited by DPP8 and DPP9, which sequester the C-terminal fragment of Nlrp1a (NACHT, LRR and PYD domains-containing protein 1a, C-terminus) in a ternary complex, thereby preventing Nlrp1a oligomerization and activation. Nlrp1a inflammasome is strongly activated by Val-boroPro (Talabostat, PT-100), an inhibitor of dipeptidyl peptidases DPP8 and DPP9. Val-boroPro relieves inhibition of DPP8 and/or DPP9 by promoting disruption of the ternary complex, releasing its C-terminal part from autoinhibition. Not activated by cleavage by B.anthracis lethal toxin (LT) endopeptidase. In terms of biological role, acts as the sensor component of the Nlrp1a inflammasome, which mediates inflammasome activation in response to various pathogen-associated signals, leading to subsequent pyroptosis. Inflammasomes are supramolecular complexes that assemble in the cytosol in response to pathogens and other damage-associated signals and play critical roles in innate immunity and inflammation. Acts as a recognition receptor (PRR): recognizes specific pathogens and other damage-associated signals, such as Val-boroPro inhibitor, and mediates the formation of the inflammasome polymeric complex. In response to pathogen-associated signals, the N-terminal part of Nlrp1a is degraded by the proteasome, releasing the cleaved C-terminal part of the protein (NACHT, LRR and PYD domains-containing protein 1a, C-terminus), which polymerizes to initiate the formation of the inflammasome complex: the inflammasome directly recruits pro-caspase-1 (proCASP1) independently of PYCARD/ASC and promotes caspase-1 (CASP1) activation, which subsequently cleaves and activates inflammatory cytokines IL1B and IL18 and gasdermin-D (GSDMD), leading to pyroptosis. In the absence of GSDMD expression, the Nlrp1a inflammasome is able to recruit and activate CASP8, leading to activation of gasdermin-E (GSDME). Functionally, constitutes the precursor of the Nlrp1a inflammasome, which mediates autoproteolytic processing within the FIIND domain to generate the N-terminal and C-terminal parts, which are associated non-covalently in absence of pathogens and other damage-associated signals. Its function is as follows. Regulatory part that prevents formation of the Nlrp1a inflammasome: in absence of pathogens and other damage-associated signals, interacts with the C-terminal part of Nlrp1a (NACHT, LRR and PYD domains-containing protein 1a, C-terminus), preventing activation of the Nlrp1a inflammasome. In response to pathogen-associated signals, this part is ubiquitinated by the N-end rule pathway and degraded by the proteasome, releasing the cleaved C-terminal part of the protein, which polymerizes and forms the Nlrp1a inflammasome. Constitutes the active part of the Nlrp1a inflammasome. In absence of pathogens and other damage-associated signals, interacts with the N-terminal part of Nlrp1a (NACHT, LRR and PYD domains-containing protein 1a, N-terminus), preventing activation of the Nlrp1a inflammasome. In response to pathogen-associated signals, the N-terminal part of Nlrp1a is degraded by the proteasome, releasing this form, which polymerizes to form the Nlrp1a inflammasome complex: the Nlrp1a inflammasome complex then directly recruits pro-caspase-1 (proCASP1) and promotes caspase-1 (CASP1) activation, leading to gasdermin-D (GSDMD) cleavage and subsequent pyroptosis. The chain is NACHT, LRR and PYD domains-containing protein 1a allele 3 from Rattus norvegicus (Rat).